The sequence spans 95 residues: FXYD domain-containing ion transport regulator 6 (95 aa).

An N-terminal signal peptide occupies residues 1–18; sequence MELVLVFLCSLLAPMVLA. Over 19 to 35 the chain is Extracellular; that stretch reads SAAEKEKEMDPFHYDYQ. The helical transmembrane segment at 36 to 57 threads the bilayer; sequence TLRIGGLVFAVVLFSVGILLIL. The Cytoplasmic portion of the chain corresponds to 58–95; the sequence is SRRCKCSFNQKPRAPGDEEAQVENLITANATEPQKAEN. The tract at residues 69–95 is disordered; that stretch reads PRAPGDEEAQVENLITANATEPQKAEN.

It belongs to the FXYD family. Regulatory subunit of the sodium/potassium-transporting ATPase which is composed of a catalytic alpha subunit, a non-catalytic beta subunit and an additional regulatory subunit. The regulatory subunit, a member of the FXYD protein family, modulates the enzymatic activity in a tissue- and isoform-specific way by changing affinities of the Na+/K+-ATPase toward Na(+), K(+) or ATP.

It localises to the cell membrane. In terms of biological role, associates with and regulates the activity of the sodium/potassium-transporting ATPase (NKA) which catalyzes the hydrolysis of ATP coupled with the exchange of Na(+) and K(+) ions across the plasma membrane. Reduces the apparent affinity for intracellular Na(+) with no change in the apparent affinity for extracellular K(+). In addition to modulating NKA kinetics, may also function as a regulator of NKA localization to the plasma membrane. The protein is FXYD domain-containing ion transport regulator 6 of Homo sapiens (Human).